The sequence spans 62 residues: Photosystem II reaction center protein Z (62 aa).

The next 2 helical transmembrane spans lie at 8–28 (AIFA…VVFA) and 41–61 (FSGT…NSLI).

This sequence belongs to the PsbZ family. In terms of assembly, PSII is composed of 1 copy each of membrane proteins PsbA, PsbB, PsbC, PsbD, PsbE, PsbF, PsbH, PsbI, PsbJ, PsbK, PsbL, PsbM, PsbT, PsbY, PsbZ, Psb30/Ycf12, at least 3 peripheral proteins of the oxygen-evolving complex and a large number of cofactors. It forms dimeric complexes.

Its subcellular location is the plastid. It is found in the chloroplast thylakoid membrane. Its function is as follows. May control the interaction of photosystem II (PSII) cores with the light-harvesting antenna, regulates electron flow through the 2 photosystem reaction centers. PSII is a light-driven water plastoquinone oxidoreductase, using light energy to abstract electrons from H(2)O, generating a proton gradient subsequently used for ATP formation. In Acorus gramineus (Dwarf sweet flag), this protein is Photosystem II reaction center protein Z.